A 344-amino-acid polypeptide reads, in one-letter code: Probable pectinesterase 67 (344 aa).

An N-terminal signal peptide occupies residues 1 to 23; sequence MGHRTRMILVLTLVVMSIWGSDA. N-linked (GlcNAc...) asparagine glycans are attached at residues asparagine 43 and asparagine 151. Position 152 (glutamine 152) interacts with substrate. Aspartate 196 functions as the Nucleophile in the catalytic mechanism. Residue arginine 256 coordinates substrate. N-linked (GlcNAc...) asparagine glycosylation occurs at asparagine 282.

This sequence belongs to the pectinesterase family. As to expression, expressed in flower buds.

It is found in the secreted. It localises to the cell wall. It carries out the reaction [(1-&gt;4)-alpha-D-galacturonosyl methyl ester](n) + n H2O = [(1-&gt;4)-alpha-D-galacturonosyl](n) + n methanol + n H(+). It participates in glycan metabolism; pectin degradation; 2-dehydro-3-deoxy-D-gluconate from pectin: step 1/5. Functionally, acts in the modification of cell walls via demethylesterification of cell wall pectin. The chain is Probable pectinesterase 67 (PME67) from Arabidopsis thaliana (Mouse-ear cress).